The following is a 593-amino-acid chain: MLLRWHSVIPLFLAMTVAFPNTYRTVVEDLPAIPEGWVQGNPPSPETSVRMNLAVGQQNTRTFEQIVLDISTPGHRNYGKHLSRRDLKGLLRPRRETSNLILSWLEKSGVPKRSIVDDGDWIHFVISISQAERMLQTRFYHFHDVQDPGISMIRTLKYSVPSRLARHVYMIQPTTKFGKPKKHANSIANLQAIYLSTNATENCNATITPRCLRELYKMGDYVAKPDCRNVIGVSGYLDQYARYSDFYKFLELYAPEMKGANFSVAHIGNGQNLQNSTRNSIEASLDIEYALGLSNASAVFYTTSGRGPLVPDLDQPEQEHNSNEPYLDQLHYLLSLPQEALPAVLSTSYGENEQSVPERFSHATCNLFAQLGARGVSVIFSSGDSGVGSSCLTNDKKKITRFNPTFPASCPFVTSVGATFKINPERATGFSSGGFSDRHSRPGYQNDAVQHYLDKLGDRWKGLYNPKGRGIPDVSAQGANFAIYDHGKVIIVSGTSASAPAFAAIIANLNAIRLRANKPVLGYLNPFIYGKGREGFTDIVHGGSKGCVGYSSTNRSTPAVPYASWNATEGWDPVTGVGTPNFRILAKIVQHME.

The first 18 residues, 1 to 18, serve as a signal peptide directing secretion; the sequence is MLLRWHSVIPLFLAMTVA. Positions 19–198 are cleaved as a propeptide — removed in mature form; it reads FPNTYRTVVE…NLQAIYLSTN (180 aa). Asn-204, Asn-261, and Asn-275 each carry an N-linked (GlcNAc...) asparagine glycan. In terms of domain architecture, Peptidase S53 spans 206–592; it reads TITPRCLREL…RILAKIVQHM (387 aa). Catalysis depends on charge relay system residues Glu-282 and Asp-286. Asn-295 carries an N-linked (GlcNAc...) asparagine glycan. The active-site Charge relay system is the Ser-496. Residues Asp-538 and Ile-539 each coordinate Ca(2+). N-linked (GlcNAc...) asparagine glycans are attached at residues Asn-554 and Asn-566. Positions 570 and 572 each coordinate Ca(2+).

Ca(2+) is required as a cofactor.

It is found in the secreted. The protein localises to the extracellular space. It catalyses the reaction Release of an N-terminal tripeptide from a polypeptide.. Secreted tripeptidyl-peptidase which degrades proteins at acidic pHs and is involved in virulence. In Arthroderma benhamiae (strain ATCC MYA-4681 / CBS 112371) (Trichophyton mentagrophytes), this protein is Probable tripeptidyl-peptidase SED3 (SED3).